We begin with the raw amino-acid sequence, 65 residues long: Large ribosomal subunit protein bL35 (65 aa).

Over residues 1–15 the composition is skewed to basic residues; the sequence is MPKMKTKKSAAKRFQ. The disordered stretch occupies residues 1–26; sequence MPKMKTKKSAAKRFQVRGSGSIKRGQ.

It belongs to the bacterial ribosomal protein bL35 family.

This is Large ribosomal subunit protein bL35 from Bordetella avium (strain 197N).